The sequence spans 200 residues: MNNIFSKLRDFVGLNEQVEYEYYEEEPETDNNYQNLYQQENPQPPAPQESATAQNRRWREPVPTMGDDIAAGSKPMGNVIGMPGAINGISEVLVLEPRTFEEMPQAIQALRERKSVVLNLTIMDPDQAQRAVDFVAGGTYALDGHQERIGESIFLFTPSCVQVSTQGGVLHEVPQPPARPSRPTGSPNQTWGNETNRMAQ.

Disordered stretches follow at residues 35 to 60 and 170 to 200; these read NLYQQENPQPPAPQESATAQNRRWRE and LHEVPQPPARPSRPTGSPNQTWGNETNRMAQ. The span at 183–200 shows a compositional bias: polar residues; that stretch reads PTGSPNQTWGNETNRMAQ.

It belongs to the SepF family. In terms of assembly, homodimer. Interacts with FtsZ.

Its subcellular location is the cytoplasm. Its function is as follows. Cell division protein that is part of the divisome complex and is recruited early to the Z-ring. Probably stimulates Z-ring formation, perhaps through the cross-linking of FtsZ protofilaments. Its function overlaps with FtsA. The polypeptide is Cell division protein SepF (Nostoc punctiforme (strain ATCC 29133 / PCC 73102)).